We begin with the raw amino-acid sequence, 24 residues long: U1-poneritoxin-Na1a (24 aa).

The protein belongs to the non-disulfide-bridged peptide (NDBP) superfamily. Medium-length antimicrobial peptide (group 3) family. Ponericin-W subfamily. As to expression, expressed by the venom gland.

Its subcellular location is the secreted. The protein resides in the target cell membrane. Functionally, has a broad spectrum of activity against both Gram-positive and Gram-negative bacteria and S.cerevisiae. Has insecticidal and hemolytic activities. May act by disrupting the integrity of the bacterial cell membrane. The chain is U1-poneritoxin-Na1a from Neoponera apicalis (Ant).